We begin with the raw amino-acid sequence, 223 residues long: UPF0758 protein HD_0732 (223 aa).

Positions 98 to 220 (TINTPHLAIM…YFSFEEERFH (123 aa)) constitute an MPN domain. Residues histidine 169, histidine 171, and aspartate 182 each contribute to the Zn(2+) site. Positions 169–182 (HNHPSGNCTASQAD) match the JAMM motif motif.

It belongs to the UPF0758 family.

This Haemophilus ducreyi (strain 35000HP / ATCC 700724) protein is UPF0758 protein HD_0732.